The following is a 457-amino-acid chain: Siroheme synthase (457 aa).

The precorrin-2 dehydrogenase /sirohydrochlorin ferrochelatase stretch occupies residues 1-204 (MDHLPIFCQL…NDQKAITETT (204 aa)). NAD(+) is bound by residues 22-23 (DV) and 43-44 (LA). Residue serine 128 is modified to Phosphoserine. A uroporphyrinogen-III C-methyltransferase region spans residues 216–457 (GEVVLVGAGP…RDKLNWFSNH (242 aa)). Proline 225 contributes to the S-adenosyl-L-methionine binding site. Aspartate 248 acts as the Proton acceptor in catalysis. The Proton donor role is filled by lysine 270. Residues 301–303 (GGD), isoleucine 306, 331–332 (TA), methionine 382, and glycine 411 contribute to the S-adenosyl-L-methionine site.

In the N-terminal section; belongs to the precorrin-2 dehydrogenase / sirohydrochlorin ferrochelatase family. It in the C-terminal section; belongs to the precorrin methyltransferase family.

The enzyme catalyses uroporphyrinogen III + 2 S-adenosyl-L-methionine = precorrin-2 + 2 S-adenosyl-L-homocysteine + H(+). The catalysed reaction is precorrin-2 + NAD(+) = sirohydrochlorin + NADH + 2 H(+). It carries out the reaction siroheme + 2 H(+) = sirohydrochlorin + Fe(2+). It participates in cofactor biosynthesis; adenosylcobalamin biosynthesis; precorrin-2 from uroporphyrinogen III: step 1/1. The protein operates within cofactor biosynthesis; adenosylcobalamin biosynthesis; sirohydrochlorin from precorrin-2: step 1/1. It functions in the pathway porphyrin-containing compound metabolism; siroheme biosynthesis; precorrin-2 from uroporphyrinogen III: step 1/1. Its pathway is porphyrin-containing compound metabolism; siroheme biosynthesis; siroheme from sirohydrochlorin: step 1/1. It participates in porphyrin-containing compound metabolism; siroheme biosynthesis; sirohydrochlorin from precorrin-2: step 1/1. In terms of biological role, multifunctional enzyme that catalyzes the SAM-dependent methylations of uroporphyrinogen III at position C-2 and C-7 to form precorrin-2 via precorrin-1. Then it catalyzes the NAD-dependent ring dehydrogenation of precorrin-2 to yield sirohydrochlorin. Finally, it catalyzes the ferrochelation of sirohydrochlorin to yield siroheme. The protein is Siroheme synthase of Escherichia coli O6:H1 (strain CFT073 / ATCC 700928 / UPEC).